The sequence spans 1693 residues: Non-structural polyprotein pORF1 (1693 aa).

Residues 56–240 (VFRPEVFWNH…HDVSNLRSWI (185 aa)) enclose the Alphavirus-like MT domain. A methyltransferase region spans residues 60–240 (EVFWNHPIQR…HDVSNLRSWI (181 aa)). Residues 241–439 (RTTKVTGDHP…FYAQCRRWLS (199 aa)) are Y-domain. Cys-434 and Cys-481 are disulfide-bonded. Residues 442–509 (FHLDPRVLVF…EAYEGSDVDP (68 aa)) are putative protease. The segment at 510–691 (AESAISDISG…FSPGHVWESA (182 aa)) is zinc-binding. The Zn(2+) site is built by His-671, Glu-673, and His-686. The interval 712–778 (SSPARPDLGL…AITHQTARHR (67 aa)) is hinge. The disordered stretch occupies residues 737-769 (AVLLPPPAPDPPPPPSAPALDEPASGATAGAPA). The segment covering 740–753 (LPPPAPDPPPPPSA) has biased composition (pro residues). Residues 775–921 (ARHRRLLFTY…LYLPELAARW (147 aa)) enclose the Macro domain. The interval 785-942 (PDGSKVFAGS…TITEDVARTA (158 aa)) is X-domain. The region spanning 934-1082 (ITEDVARTAN…RPDLGPTSWW (149 aa)) is the (+)RNA virus helicase ATP-binding domain. The interval 960-1204 (GCRVTPGVVQ…ISDAIVNNFF (245 aa)) is NTPase/helicase. An ATP-binding site is contributed by 975-982 (GVPGSGKS). In terms of domain architecture, (+)RNA virus helicase C-terminal spans 1083–1216 (HVTHRCPADV…GGEIGHQRPS (134 aa)). Positions 1207–1693 (GGEIGHQRPS…LTNSILCRVE (487 aa)) are RNA-directed RNA polymerase. The region spanning 1454 to 1565 (SMVFENDFSE…LCSEYRQSPG (112 aa)) is the RdRp catalytic domain.

Belongs to the hepevirus non-structural polyprotein family. The protease domain interacts with host EIF2AK4 (via C-terminus); this interaction inhibits dimerization of EIF2AK4 and prevents EIF2AK4-mediated phosphorylation of host EIF2A. Mg(2+) serves as cofactor. ORF1 polyprotein does not seem to be processed into distinct enzymatic domains by a viral protease belonging to ORF1, but could be processed by a host serine protease like thrombin.

It localises to the host cytoplasm. The protein resides in the host perinuclear region. It carries out the reaction RNA(n) + a ribonucleoside 5'-triphosphate = RNA(n+1) + diphosphate. The catalysed reaction is GTP + S-adenosyl-L-methionine = N(7)-methyl-GTP + S-adenosyl-L-homocysteine. With respect to regulation, putative protease: Inhibited by chymostatin. Methyltransferase: Displays a capping enzyme activity. This function is necessary since all viral RNAs are synthesized in the cytoplasm, and host capping enzymes are restricted to the nucleus. The enzymatic reaction involves a covalent link between 7-methyl-GMP and the methyltransferase, whereas eukaryotic capping enzymes form a covalent complex only with GMP. Methyltransferase catalyzes transfer of a methyl group from S-adenosylmethionine to GTP and GDP to yield m(7)GTP or m(7)GDP. GDP is a better substrate than GTP. This enzyme also displays guanylyltransferase activity to form a covalent complex, methyltransferase-m(7)GMP, from which 7-methyl-GMP is transferred to the mRNA to create the cap structure. In terms of biological role, Y-domain: Indispensable for virus replication. Functionally, putative protease: The putative protease domain although necessary for replication of the virus may not be a protease but rather a structural Zn(2+)-binding domain. Inhibits induction of IFN-beta by MDA5 and RIG-I pathways and down-regulates the expression of MDA5. Its function is as follows. NTPase/helicase: Multi-functional protein that exhibits NTPase and RNA unwinding activities. Hydrolyzes all NTPs efficiently and unwinds RNA duplexes containing 5' overhangs. Possesses a sequence independent RNA-5'-triphosphatase (RTPase) activity suggestive of its role in forming viral cap structure. Also participates in viral genome replication, RNA translocation and genome packaging/unpackaging. RNA-directed RNA polymerase: Plays an essential role in the virus replication. Binds to the 3'-end of the genomic RNA to initiate viral replication. This Hepatitis E virus genotype 1 (isolate Human/Myanmar/HEVNE8L) (HEV-1) protein is Non-structural polyprotein pORF1.